The following is a 369-amino-acid chain: Galactose-1-phosphate uridylyltransferase (369 aa).

Residues Cys54 and Cys57 each coordinate Zn(2+). UDP-alpha-D-glucose contacts are provided by residues Ala63 and 79–80; that span reads ND. His127 serves as a coordination point for Zn(2+). UDP-alpha-D-glucose is bound at residue Asn172. His183 serves as a coordination point for Zn(2+). Catalysis depends on His185, which acts as the Tele-UMP-histidine intermediate. Gln187 is a binding site for UDP-alpha-D-glucose. Residues Glu201, His300, His317, and His319 each coordinate Fe cation. UDP-alpha-D-glucose-binding positions include 332–335 and 337–338; these read KFCV and FE.

This sequence belongs to the galactose-1-phosphate uridylyltransferase type 1 family. As to quaternary structure, homodimer. It depends on Zn(2+) as a cofactor.

It catalyses the reaction alpha-D-galactose 1-phosphate + UDP-alpha-D-glucose = alpha-D-glucose 1-phosphate + UDP-alpha-D-galactose. The protein operates within carbohydrate metabolism; galactose metabolism. The chain is Galactose-1-phosphate uridylyltransferase (gal7) from Schizosaccharomyces pombe (strain 972 / ATCC 24843) (Fission yeast).